A 288-amino-acid polypeptide reads, in one-letter code: Lipoyl synthase (288 aa).

Residues Cys-39, Cys-44, Cys-50, Cys-65, Cys-69, Cys-72, and Ser-276 each contribute to the [4Fe-4S] cluster site. The Radical SAM core domain occupies 51–265 (WGKGTATFMI…KETGLKKGFE (215 aa)).

The protein belongs to the radical SAM superfamily. Lipoyl synthase family. [4Fe-4S] cluster is required as a cofactor.

It is found in the cytoplasm. The catalysed reaction is [[Fe-S] cluster scaffold protein carrying a second [4Fe-4S](2+) cluster] + N(6)-octanoyl-L-lysyl-[protein] + 2 oxidized [2Fe-2S]-[ferredoxin] + 2 S-adenosyl-L-methionine + 4 H(+) = [[Fe-S] cluster scaffold protein] + N(6)-[(R)-dihydrolipoyl]-L-lysyl-[protein] + 4 Fe(3+) + 2 hydrogen sulfide + 2 5'-deoxyadenosine + 2 L-methionine + 2 reduced [2Fe-2S]-[ferredoxin]. It functions in the pathway protein modification; protein lipoylation via endogenous pathway; protein N(6)-(lipoyl)lysine from octanoyl-[acyl-carrier-protein]: step 2/2. Catalyzes the radical-mediated insertion of two sulfur atoms into the C-6 and C-8 positions of the octanoyl moiety bound to the lipoyl domains of lipoate-dependent enzymes, thereby converting the octanoylated domains into lipoylated derivatives. The protein is Lipoyl synthase of Bacteroides fragilis (strain ATCC 25285 / DSM 2151 / CCUG 4856 / JCM 11019 / LMG 10263 / NCTC 9343 / Onslow / VPI 2553 / EN-2).